The sequence spans 1226 residues: E3 ubiquitin-protein ligase mind-bomb (1226 aa).

The segment covering 1–12 (MSCAATLSSAKD) has biased composition (polar residues). Disordered regions lie at residues 1–42 (MSCA…NTNT) and 66–87 (GGGGSLPGGTTSSSSASAAGGV). The segment covering 19–30 (SGGGGGGGGGGA) has biased composition (gly residues). Low complexity-rich tracts occupy residues 31-42 (PTNSNTNTNTNT) and 73-86 (GGTTSSSSASAAGG). An MIB/HERC2 1 domain is found at 100–168 (VRRFSMEGVG…AYDLRILDSA (69 aa)). A ZZ-type zinc finger spans residues 174 to 226 (HEGTMCDTCRQQPIFGIRWKCAECINYDLCSICYHGDKHHLRHRFYRITTPGG). The Zn(2+) site is built by Cys179, Cys182, Cys194, Cys197, Cys203, Cys206, His212, and His216. Residues 237–315 (SKKVLARGIF…MADLKVVNDA (79 aa)) enclose the MIB/HERC2 2 domain. 8 ANK repeats span residues 567–596 (AGHTALQAASQNGHIEVIQVLLRHAVDVEI), 600–629 (DGDRAVHHAAFGDEAAVIEILAKAGADLNA), 633–662 (RRQTSLHIAVNKGHLNVVKTLLTLGCHPSL), 666–695 (EGDTPLHDAISKEHDEMLSLLLDFGADITL), 699–731 (NGFNALHHAALKGNPSAMKILLTKTNRPWIVEE), 735–765 (DGYTALHLAALNNHVEIAELLVHMGKANMDR), 769–798 (NLQTALHLAVERQHVQIVKLLVQDGADLNI), and 802–833 (DGDTPLHEALRHHTLSQLKQLQDVEGFGKLLM). Residues 890–919 (TDDSELPGNVAGTSSSARARAASGSLNQSS) form a disordered region. Residues 900–914 (AGTSSSARARAASGS) show a composition bias toward low complexity. RING-type zinc fingers lie at residues 970-1005 (CLVCSDAKRDTVFKPCGHVSCCETCAPRVKKCLICR) and 1017-1052 (CLVCSDRRAAVFFRPCGHMVACEHCSALMKKCVLCR). The stretch at 1159–1181 (VNNFQMDDVQKLKQQLQDIKEQT) forms a coiled coil. The segment at 1183-1216 (CPVCFDRIKNMVFLCGHGTCQMCGDQIEGCPICR) adopts an RING-type 3 zinc-finger fold.

In terms of assembly, interacts with intracellular domain of Dl and Ser. Ubiquitous in the wing imaginal disk (at protein level).

The protein resides in the cytoplasm. It is found in the cell cortex. The catalysed reaction is S-ubiquitinyl-[E2 ubiquitin-conjugating enzyme]-L-cysteine + [acceptor protein]-L-lysine = [E2 ubiquitin-conjugating enzyme]-L-cysteine + N(6)-ubiquitinyl-[acceptor protein]-L-lysine.. The protein operates within protein modification; protein ubiquitination. Its function is as follows. E3 ubiquitin-protein ligase that mediates ubiquitination of Delta (Dl) and Serrate (Ser) receptors, which act as ligands of Notch proteins. Positively regulates the Notch signaling by ubiquitinating the intracellular domain of Dl and Ser, leading to endocytosis of Dl and Ser receptors. Regulates a subset of Notch signaling events, including wing margin specification, leg segmentation and vein determination, that are distinct from those events requiring neuralize (neur) activity. Also modulates lateral inhibition, a neur- and Dl-dependent signaling event, suggesting a distinct but partially complementary function with neur. This Drosophila melanogaster (Fruit fly) protein is E3 ubiquitin-protein ligase mind-bomb (mib1).